Here is a 341-residue protein sequence, read N- to C-terminus: Uroporphyrinogen decarboxylase (341 aa).

Substrate contacts are provided by residues 25 to 29 (RQAGR), Phe-44, Asp-74, Tyr-151, Ser-206, and His-318.

Belongs to the uroporphyrinogen decarboxylase family. In terms of assembly, homodimer.

Its subcellular location is the cytoplasm. The catalysed reaction is uroporphyrinogen III + 4 H(+) = coproporphyrinogen III + 4 CO2. Its pathway is porphyrin-containing compound metabolism; protoporphyrin-IX biosynthesis; coproporphyrinogen-III from 5-aminolevulinate: step 4/4. Its function is as follows. Catalyzes the decarboxylation of four acetate groups of uroporphyrinogen-III to yield coproporphyrinogen-III. In Christiangramia forsetii (strain DSM 17595 / CGMCC 1.15422 / KT0803) (Gramella forsetii), this protein is Uroporphyrinogen decarboxylase.